The following is a 632-amino-acid chain: Probable potassium transport system protein Kup 1 (632 aa).

Helical transmembrane passes span 17-37 (LFYL…TSPL), 60-80 (LISL…VLFL), 106-126 (TALL…DAMI), 144-164 (PSLA…LFVV), 175-195 (FFGP…ISHI), 210-230 (AVSF…AVFL), 254-274 (WFLL…ALVL), 292-312 (ALLP…QAVI), 344-364 (IFLP…VLSF), 370-390 (LATA…IMAF), 401-421 (LPVA…FLGA), and 426-446 (IHDG…VMWT).

Belongs to the HAK/KUP transporter (TC 2.A.72) family.

Its subcellular location is the cell inner membrane. It catalyses the reaction K(+)(in) + H(+)(in) = K(+)(out) + H(+)(out). Functionally, transport of potassium into the cell. Likely operates as a K(+):H(+) symporter. This is Probable potassium transport system protein Kup 1 from Rhizobium etli (strain ATCC 51251 / DSM 11541 / JCM 21823 / NBRC 15573 / CFN 42).